The following is an 85-amino-acid chain: Large ribosomal subunit protein bL27 (85 aa).

Residues 1–21 (MAHKKAAGSTKNGRDSNAKRL) form a disordered region.

This sequence belongs to the bacterial ribosomal protein bL27 family.

The sequence is that of Large ribosomal subunit protein bL27 from Hydrogenovibrio crunogenus (strain DSM 25203 / XCL-2) (Thiomicrospira crunogena).